The following is a 148-amino-acid chain: Small ribosomal subunit protein bS6 (148 aa).

The segment at 96–148 is disordered; it reads HEEGQSAMLTRRDDRRERDGDDRPRRREGGFDRGDRGDRGPRRPRDTEAGEGA.

This sequence belongs to the bacterial ribosomal protein bS6 family.

Binds together with bS18 to 16S ribosomal RNA. In Brucella canis (strain ATCC 23365 / NCTC 10854 / RM-666), this protein is Small ribosomal subunit protein bS6.